Consider the following 544-residue polypeptide: MISSLAAITGGPSTFRRDPDSNTLRLSRRKTLISVLRSCKNIAHVPSIHAKIIRTFHDQDAFVVFELIRVCSTLDSVDYAYDVFSYVSNPNVYLYTAMIDGFVSSGRSADGVSLYHRMIHNSVLPDNYVITSVLKACDLKVCREIHAQVLKLGFGSSRSVGLKMMEIYGKSGELVNAKKMFDEMPDRDHVAATVMINCYSECGFIKEALELFQDVKIKDTVCWTAMIDGLVRNKEMNKALELFREMQMENVSANEFTAVCVLSACSDLGALELGRWVHSFVENQRMELSNFVGNALINMYSRCGDINEARRVFRVMRDKDVISYNTMISGLAMHGASVEAINEFRDMVNRGFRPNQVTLVALLNACSHGGLLDIGLEVFNSMKRVFNVEPQIEHYGCIVDLLGRVGRLEEAYRFIENIPIEPDHIMLGTLLSACKIHGNMELGEKIAKRLFESENPDSGTYVLLSNLYASSGKWKESTEIRESMRDSGIEKEPGCSTIEVDNQIHEFLVGDIAHPHKEAIYQRLQELNRILRFKENQIDIIMGF.

Residues 1–21 (MISSLAAITGGPSTFRRDPDS) are disordered. Residues 1–25 (MISSLAAITGGPSTFRRDPDSNTLR) constitute a chloroplast transit peptide. PPR repeat units lie at residues 60 to 90 (DAFV…VSNP), 91 to 125 (NVYL…SVLP), 127 to 156 (NYVI…GFGS), 157 to 187 (SRSV…MPDR), 188 to 218 (DHVA…VKIK), 219 to 253 (DTVC…NVSA), 254 to 288 (NEFT…RMEL), 289 to 319 (SNFV…MRDK), 320 to 354 (DVIS…GFRP), 355 to 385 (NQVT…MKRV), and 391 to 421 (QIEH…IPIE). The interval 426–501 (MLGTLLSACK…EPGCSTIEVD (76 aa)) is type E motif. The tract at residues 502 to 532 (NQIHEFLVGDIAHPHKEAIYQRLQELNRILR) is type E(+) motif.

The protein belongs to the PPR family. PCMP-E subfamily.

It is found in the plastid. The protein localises to the chloroplast. In terms of biological role, involved in RNA editing event in chloroplasts. Required for the editing of a single site in rpl23 transcript. In Arabidopsis thaliana (Mouse-ear cress), this protein is Putative pentatricopeptide repeat-containing protein At5g59200, chloroplastic (PCMP-E41).